The sequence spans 145 residues: Regulator of sigma D (145 aa).

Belongs to the Rsd/AlgQ family. In terms of assembly, interacts with RpoD.

It is found in the cytoplasm. Binds RpoD and negatively regulates RpoD-mediated transcription activation by preventing the interaction between the primary sigma factor RpoD with the catalytic core of the RNA polymerase and with promoter DNA. May be involved in replacement of the RNA polymerase sigma subunit from RpoD to RpoS during the transition from exponential growth to the stationary phase. The protein is Regulator of sigma D of Sodalis glossinidius (strain morsitans).